A 98-amino-acid chain; its full sequence is Large ribosomal subunit protein uL23 (98 aa).

It belongs to the universal ribosomal protein uL23 family. As to quaternary structure, part of the 50S ribosomal subunit. Contacts protein L29, and trigger factor when it is bound to the ribosome.

Its function is as follows. One of the early assembly proteins it binds 23S rRNA. One of the proteins that surrounds the polypeptide exit tunnel on the outside of the ribosome. Forms the main docking site for trigger factor binding to the ribosome. The polypeptide is Large ribosomal subunit protein uL23 (Frankia casuarinae (strain DSM 45818 / CECT 9043 / HFP020203 / CcI3)).